Reading from the N-terminus, the 155-residue chain is Large ribosomal subunit protein eL24 (155 aa).

Positions 97–129 (KPEIRKAKRDEKAKADKEKKKADKAARKADKAK) are enriched in basic and acidic residues. A disordered region spans residues 97–155 (KPEIRKAKRDEKAKADKEKKKADKAARKADKAKSAATQASKISKQQAKGAFQKVAATSR). Over residues 133 to 142 (TQASKISKQQ) the composition is skewed to polar residues.

This sequence belongs to the eukaryotic ribosomal protein eL24 family.

The sequence is that of Large ribosomal subunit protein eL24 (RPL24) from Eremothecium gossypii (strain ATCC 10895 / CBS 109.51 / FGSC 9923 / NRRL Y-1056) (Yeast).